We begin with the raw amino-acid sequence, 333 residues long: DNA-directed RNA polymerase subunit alpha (333 aa).

The tract at residues 1–234 (MQISVNEFLT…QQLAAFVDLK (234 aa)) is alpha N-terminal domain (alpha-NTD). An alpha C-terminal domain (alpha-CTD) region spans residues 248 to 333 (IDPILLRPVD…SLKKDDKATA (86 aa)).

This sequence belongs to the RNA polymerase alpha chain family. As to quaternary structure, homodimer. The RNAP catalytic core consists of 2 alpha, 1 beta, 1 beta' and 1 omega subunit. When a sigma factor is associated with the core the holoenzyme is formed, which can initiate transcription.

It carries out the reaction RNA(n) + a ribonucleoside 5'-triphosphate = RNA(n+1) + diphosphate. DNA-dependent RNA polymerase catalyzes the transcription of DNA into RNA using the four ribonucleoside triphosphates as substrates. The polypeptide is DNA-directed RNA polymerase subunit alpha (Pseudomonas fluorescens (strain ATCC BAA-477 / NRRL B-23932 / Pf-5)).